The primary structure comprises 295 residues: Alpha-ketoglutarate-dependent dioxygenase alkB homolog 3 (295 aa).

Positions 1 to 48 (MGDKRQRARVQGAWATPTKSQSAARPATPARSRPSQTPGPSWRSKEQQ) are disordered. Low complexity predominate over residues 22–35 (SAARPATPARSRPS). Residues tryptophan 115 and 141-143 (YTY) each bind substrate. The 107-residue stretch at 172-278 (TFNSLLCNFY…RVNLTFRTVY (107 aa)) folds into the Fe2OG dioxygenase domain. Leucine 177 carries the (4R)-5-hydroxyleucine; alternate modification. At leucine 177 the chain carries (4R)-5-oxoleucine; alternate. 179–181 (NFY) lines the 2-oxoglutarate pocket. Positions 191 and 193 each coordinate Fe cation. Aspartate 194 contributes to the substrate binding site. Histidine 257 is a Fe cation binding site. Residues 269 to 275 (RVNLTFR) and arginine 275 contribute to the 2-oxoglutarate site.

The protein belongs to the alkB family. Interacts with the ASCC complex composed of ASCC1, ASCC2 and ASCC3. Interacts directly with ASCC3, and is thereby recruited to the ASCC complex. Interacts with OTUD4; the interaction is direct. Interacts with USP7 and USP9X. Requires Fe(2+) as cofactor. Post-translationally, ubiquitinated; undergoes 'Lys-48'-linked polyubiquitination. OTUD4 promotes USP7 and USP9X-dependent deubiquitination of 'Lys-48'-polyubiquitinated ALKBH3 promoting the repair of alkylated DNA lesions.

The protein resides in the nucleus. The protein localises to the cytoplasm. The enzyme catalyses an N(1)-methyladenosine in mRNA + 2-oxoglutarate + O2 = an adenosine in mRNA + formaldehyde + succinate + CO2. It catalyses the reaction a methylated nucleobase within DNA + 2-oxoglutarate + O2 = a nucleobase within DNA + formaldehyde + succinate + CO2. It carries out the reaction an N(1)-methyl-2'-deoxyadenosine in single-stranded DNA + 2-oxoglutarate + O2 = a 2'-deoxyadenosine in single-stranded DNA + formaldehyde + succinate + CO2 + H(+). The catalysed reaction is an N(3)-methyl-2'-deoxycytidine in single-stranded DNA + 2-oxoglutarate + O2 = a 2'-deoxycytidine in single-stranded DNA + formaldehyde + succinate + CO2 + H(+). The enzyme catalyses a 3,N(4)-etheno-2'-deoxycytidine in single-stranded DNA + 2-oxoglutarate + O2 + H2O = a 2'-deoxycytidine in single-stranded DNA + glyoxal + succinate + CO2. Activated by ascorbate. Dioxygenase that mediates demethylation of DNA and RNA containing 1-methyladenosine (m1A). Repairs alkylated DNA containing 1-methyladenosine (m1A) and 3-methylcytosine (m3C) by oxidative demethylation. Has a strong preference for single-stranded DNA. Able to process alkylated m3C within double-stranded regions via its interaction with ASCC3, which promotes DNA unwinding to generate single-stranded substrate needed for ALKBH3. Can repair exocyclic 3,N4-ethenocytosine adducs in single-stranded DNA. Also acts on RNA. Demethylates N(1)-methyladenosine (m1A) RNA, an epigenetic internal modification of messenger RNAs (mRNAs) highly enriched within 5'-untranslated regions (UTRs) and in the vicinity of start codons. Requires molecular oxygen, alpha-ketoglutarate and iron. The polypeptide is Alpha-ketoglutarate-dependent dioxygenase alkB homolog 3 (Rattus norvegicus (Rat)).